A 103-amino-acid chain; its full sequence is Large ribosomal subunit protein bL21 (103 aa).

It belongs to the bacterial ribosomal protein bL21 family. In terms of assembly, part of the 50S ribosomal subunit. Contacts protein L20.

Its function is as follows. This protein binds to 23S rRNA in the presence of protein L20. The chain is Large ribosomal subunit protein bL21 from Photobacterium profundum (strain SS9).